A 315-amino-acid chain; its full sequence is Intradiol ring-cleavage dioxygenase prcA (315 aa).

Fe cation is bound by residues Tyr166, Tyr200, His224, and His226. Positions 287–315 are disordered; the sequence is KKHHPNPNSAPPVSSFERFNKASKTQEKL. Residues 304-315 are compositionally biased toward basic and acidic residues; it reads RFNKASKTQEKL.

The protein belongs to the intradiol ring-cleavage dioxygenase family. Homodimer. Fe(3+) serves as cofactor.

The catalysed reaction is 3,4-dihydroxybenzoate + O2 = 3-carboxy-cis,cis-muconate + 2 H(+). Its function is as follows. Intradiol ring-cleavage dioxygenase; part of the benzoic acid degradation pathway also known as the protocatechuic acid pathway. Benzoic acid debradation begins with the conversion of benzoic acid into 4-hydroxybenzoic acid through hydroxylation by the benzoate-4-monooxygenase bphA, and its partner NADPH-cytochrome P450 reductase cprA which act as a mediator in electron donation from NADPH. 4-Hydroxybenzoic acid is then converted into 3,4-dihydroxybenzoic acid (also called protocatechuic acid) by the p-hydroxybenzoate-m-hydroxylase phhA. Protocatechuic acid is converted into 3-carboxy-cis,cis-muconic acid by the intradiol ring-cleavage dioxygenase prcA, which is further metabolized through the 3-oxoadipate pathway to finally enter the tricarboxylic acid cycle (TCA). The protein is Intradiol ring-cleavage dioxygenase prcA of Aspergillus niger (strain ATCC MYA-4892 / CBS 513.88 / FGSC A1513).